Here is a 285-residue protein sequence, read N- to C-terminus: Bifunctional protein FolD (285 aa).

NADP(+) is bound by residues 166–168 (GAS) and isoleucine 232.

It belongs to the tetrahydrofolate dehydrogenase/cyclohydrolase family. As to quaternary structure, homodimer.

It carries out the reaction (6R)-5,10-methylene-5,6,7,8-tetrahydrofolate + NADP(+) = (6R)-5,10-methenyltetrahydrofolate + NADPH. The enzyme catalyses (6R)-5,10-methenyltetrahydrofolate + H2O = (6R)-10-formyltetrahydrofolate + H(+). It participates in one-carbon metabolism; tetrahydrofolate interconversion. Functionally, catalyzes the oxidation of 5,10-methylenetetrahydrofolate to 5,10-methenyltetrahydrofolate and then the hydrolysis of 5,10-methenyltetrahydrofolate to 10-formyltetrahydrofolate. The sequence is that of Bifunctional protein FolD from Psychromonas ingrahamii (strain DSM 17664 / CCUG 51855 / 37).